The chain runs to 463 residues: MAARRDQVIHLLRQLQRASCKCPAHSHTYSQAPVTGRKTEYAFEMAVSNIRYGENVTQEIGMDLQNLGARNVCVMTDRNLVELSPVKAVLNSLVKNNVSFKLYDRVRVEPTDKSFMDAIEFAKKGQFDAYVGVGGGSVIDTCKAANLYSSSPGADFLDYVNPPIGKGKAVTVPLKPLIAVPTTSGTGSETTGIAIFDYEELKAKTGIASRAIKPTLGLIDPVHTLSMPERVVANSGFDVLCHSLESYTALPYNMRSPCPTNPINRPAYQGSNPISDVWAKHALRIVAKYLKRAVRNPDDREARFAMHLASSFAGVGFGNAGVHLCHGMSYPIAGHVKTYRAKDYEVDHPLVPHGLSVVLTSPAVFSFTALMCPERHLEAAEILGADIRTAKIKEAGLILADTLRKFLYDLNVDDGLAAVGYTTEDIPALVKGTLPQERVTKLSPRAHSEEELAGLFEASMKLY.

Belongs to the iron-containing alcohol dehydrogenase family. Hydroxyacid-oxoacid transhydrogenase subfamily.

It localises to the mitochondrion. It carries out the reaction (S)-3-hydroxybutanoate + 2-oxoglutarate = (R)-2-hydroxyglutarate + acetoacetate. It catalyses the reaction 4-hydroxybutanoate + 2-oxoglutarate = (R)-2-hydroxyglutarate + succinate semialdehyde. Catalyzes the cofactor-independent reversible oxidation of gamma-hydroxybutyrate (GHB) to succinic semialdehyde (SSA) coupled to reduction of 2-ketoglutarate (2-KG) to D-2-hydroxyglutarate (D-2-HG). L-3-hydroxybutyrate (L-3-OHB) is also a substrate for HOT when using 2-KG as hydrogen acceptor, resulting in the formation of D-2-HG. The polypeptide is Hydroxyacid-oxoacid transhydrogenase, mitochondrial (adhfe1) (Xenopus tropicalis (Western clawed frog)).